We begin with the raw amino-acid sequence, 98 residues long: Integration host factor subunit alpha (98 aa).

Positions 49-71 (FGNFDLRDKNQRPGRNPKTGEDI) are disordered.

The protein belongs to the bacterial histone-like protein family. Heterodimer of an alpha and a beta chain.

Functionally, this protein is one of the two subunits of integration host factor, a specific DNA-binding protein that functions in genetic recombination as well as in transcriptional and translational control. The protein is Integration host factor subunit alpha of Shewanella oneidensis (strain ATCC 700550 / JCM 31522 / CIP 106686 / LMG 19005 / NCIMB 14063 / MR-1).